Consider the following 527-residue polypeptide: Glutamate--cysteine ligase (527 aa).

Belongs to the glutamate--cysteine ligase type 1 family. Type 1 subfamily.

It catalyses the reaction L-cysteine + L-glutamate + ATP = gamma-L-glutamyl-L-cysteine + ADP + phosphate + H(+). The protein operates within sulfur metabolism; glutathione biosynthesis; glutathione from L-cysteine and L-glutamate: step 1/2. In Bordetella parapertussis (strain 12822 / ATCC BAA-587 / NCTC 13253), this protein is Glutamate--cysteine ligase.